The primary structure comprises 239 residues: Protein-S-isoprenylcysteine O-methyltransferase (239 aa).

Over 1–23 the chain is Cytoplasmic; the sequence is MHQDFQEDEHEYPDIRRNPLHEV. The helical transmembrane segment at 24 to 44 threads the bilayer; that stretch reads TMTSYILGILLGIFVGLFPQI. The Lumenal segment spans residues 45 to 47; the sequence is RFK. Residues 48 to 68 form a helical membrane-spanning segment; the sequence is NFNLFIIALSLFHFLEYYITA. The Cytoplasmic segment spans residues 69–88; the sequence is KYNPLKVHSESFLLNNGKSY. A helical transmembrane segment spans residues 89 to 109; sequence MAAHSFAILECLVESFLFPDL. Lys110 is a topological domain (lumenal). Residues 111–131 traverse the membrane as a helical segment; it reads IFSYSLATKLCTVLGCLLVIL. Residues 132-175 are Cytoplasmic-facing; that stretch reads GQYTRTIAMHTAGHSFSHIVKTKKESDHVLVKTGVYSWSRHPSY. S-adenosyl-L-methionine contacts are provided by residues 159 to 162, Tyr167, and 172 to 175; these read HVLV and HPSY. Positions 176–206 form an intramembrane region, helical; it reads LGFFWWAIGTQLLLLNPLSLVIFIFVLWKFF. Over 207-239 the chain is Cytoplasmic; that stretch reads SDRIRVEEKYLIEFFSAEYIEYKNKVGVGIPFI. Substrate is bound at residue Arg209. Residue Glu213 participates in S-adenosyl-L-methionine binding.

The protein belongs to the class VI-like SAM-binding methyltransferase superfamily. Isoprenylcysteine carboxyl methyltransferase family.

The protein resides in the endoplasmic reticulum membrane. The enzyme catalyses [protein]-C-terminal S-[(2E,6E)-farnesyl]-L-cysteine + S-adenosyl-L-methionine = [protein]-C-terminal S-[(2E,6E)-farnesyl]-L-cysteine methyl ester + S-adenosyl-L-homocysteine. Mediates C-terminal methylation of the isoprenylated C-terminal cysteine in A-factor mating pheromone and Ras proteins. Does not have a preference for the farnesyl or geranylgeranyl moieties in the model substrates N-acetyl-S-farnesyl-L-cysteine (AFC) and N-acetyl-S-geranylgeranyl-L-cysteine (AGGC) in vitro. This Saccharomyces cerevisiae (strain ATCC 204508 / S288c) (Baker's yeast) protein is Protein-S-isoprenylcysteine O-methyltransferase (STE14).